The primary structure comprises 351 residues: Phosphoribosylformylglycinamidine cyclo-ligase (351 aa).

This sequence belongs to the AIR synthase family.

The protein localises to the cytoplasm. It carries out the reaction 2-formamido-N(1)-(5-O-phospho-beta-D-ribosyl)acetamidine + ATP = 5-amino-1-(5-phospho-beta-D-ribosyl)imidazole + ADP + phosphate + H(+). It participates in purine metabolism; IMP biosynthesis via de novo pathway; 5-amino-1-(5-phospho-D-ribosyl)imidazole from N(2)-formyl-N(1)-(5-phospho-D-ribosyl)glycinamide: step 2/2. The polypeptide is Phosphoribosylformylglycinamidine cyclo-ligase (Lysinibacillus sphaericus (strain C3-41)).